The primary structure comprises 156 residues: ATP synthase subunit b (156 aa).

Residues 12–32 form a helical membrane-spanning segment; that stretch reads VAFFIFVLFCMKFVWPPVIAA.

It belongs to the ATPase B chain family. F-type ATPases have 2 components, F(1) - the catalytic core - and F(0) - the membrane proton channel. F(1) has five subunits: alpha(3), beta(3), gamma(1), delta(1), epsilon(1). F(0) has three main subunits: a(1), b(2) and c(10-14). The alpha and beta chains form an alternating ring which encloses part of the gamma chain. F(1) is attached to F(0) by a central stalk formed by the gamma and epsilon chains, while a peripheral stalk is formed by the delta and b chains.

The protein localises to the cell inner membrane. F(1)F(0) ATP synthase produces ATP from ADP in the presence of a proton or sodium gradient. F-type ATPases consist of two structural domains, F(1) containing the extramembraneous catalytic core and F(0) containing the membrane proton channel, linked together by a central stalk and a peripheral stalk. During catalysis, ATP synthesis in the catalytic domain of F(1) is coupled via a rotary mechanism of the central stalk subunits to proton translocation. In terms of biological role, component of the F(0) channel, it forms part of the peripheral stalk, linking F(1) to F(0). The protein is ATP synthase subunit b of Pseudomonas aeruginosa (strain UCBPP-PA14).